Here is an 800-residue protein sequence, read N- to C-terminus: Elongation factor G, mitochondrial (800 aa).

The N-terminal 59 residues, 1 to 59, are a transit peptide targeting the mitochondrion; that stretch reads MRVIRAVATLHAGRAAAVRQGVRSVSLGACRAAVETPSLRSAGSQFESRRLFSRSSYLR. Residues 99–385 form the tr-type G domain; it reads ARVRNIGIAA…AVCDYLPNPN (287 aa). GTP contacts are provided by residues 108 to 115, 183 to 187, and 237 to 240; these read AHIDSGKT, DTPGH, and NKMD.

Belongs to the TRAFAC class translation factor GTPase superfamily. Classic translation factor GTPase family. EF-G/EF-2 subfamily.

It localises to the mitochondrion. The protein operates within protein biosynthesis; polypeptide chain elongation. Mitochondrial GTPase that catalyzes the GTP-dependent ribosomal translocation step during translation elongation. During this step, the ribosome changes from the pre-translocational (PRE) to the post-translocational (POST) state as the newly formed A-site-bound peptidyl-tRNA and P-site-bound deacylated tRNA move to the P and E sites, respectively. Catalyzes the coordinated movement of the two tRNA molecules, the mRNA and conformational changes in the ribosome. The chain is Elongation factor G, mitochondrial (mef1) from Neurospora crassa (strain ATCC 24698 / 74-OR23-1A / CBS 708.71 / DSM 1257 / FGSC 987).